The primary structure comprises 276 residues: Ubiquinone biosynthesis protein coq11, mitochondrial (276 aa).

It belongs to the NAD(P)-dependent epimerase/dehydratase family.

The protein resides in the mitochondrion. Functionally, acts in the coenzyme Q biosynthetic pathway. In Schizosaccharomyces pombe (strain 972 / ATCC 24843) (Fission yeast), this protein is Ubiquinone biosynthesis protein coq11, mitochondrial.